A 222-amino-acid polypeptide reads, in one-letter code: Protein-L-isoaspartate O-methyltransferase (222 aa).

Ser-70 is a catalytic residue.

The protein belongs to the methyltransferase superfamily. L-isoaspartyl/D-aspartyl protein methyltransferase family.

It is found in the cytoplasm. The enzyme catalyses [protein]-L-isoaspartate + S-adenosyl-L-methionine = [protein]-L-isoaspartate alpha-methyl ester + S-adenosyl-L-homocysteine. Functionally, catalyzes the methyl esterification of L-isoaspartyl residues in peptides and proteins that result from spontaneous decomposition of normal L-aspartyl and L-asparaginyl residues. It plays a role in the repair and/or degradation of damaged proteins. This Jannaschia sp. (strain CCS1) protein is Protein-L-isoaspartate O-methyltransferase.